The sequence spans 204 residues: dITP/XTP pyrophosphatase (204 aa).

8-13 (SNNAHK) contacts substrate. Mg(2+)-binding residues include glutamate 41 and aspartate 76. The Proton acceptor role is filled by aspartate 76. Residues serine 77, 159-162 (FGYD), lysine 182, and 187-188 (HR) each bind substrate.

It belongs to the HAM1 NTPase family. Homodimer. The cofactor is Mg(2+).

It catalyses the reaction XTP + H2O = XMP + diphosphate + H(+). The catalysed reaction is dITP + H2O = dIMP + diphosphate + H(+). The enzyme catalyses ITP + H2O = IMP + diphosphate + H(+). Its function is as follows. Pyrophosphatase that catalyzes the hydrolysis of nucleoside triphosphates to their monophosphate derivatives, with a high preference for the non-canonical purine nucleotides XTP (xanthosine triphosphate), dITP (deoxyinosine triphosphate) and ITP. Seems to function as a house-cleaning enzyme that removes non-canonical purine nucleotides from the nucleotide pool, thus preventing their incorporation into DNA/RNA and avoiding chromosomal lesions. The sequence is that of dITP/XTP pyrophosphatase from Clostridium perfringens (strain 13 / Type A).